The following is a 254-amino-acid chain: Nickel import ATP-binding protein NikD (254 aa).

The ABC transporter domain occupies 2-241; the sequence is PQQIELRNIA…PKHTVTRSLV (240 aa). ATP is bound at residue 36–43; sequence GGSGSGKS.

Belongs to the ABC transporter superfamily. Nickel importer (TC 3.A.1.5.3) family. In terms of assembly, the complex is composed of two ATP-binding proteins (NikD and NikE), two transmembrane proteins (NikB and NikC) and a solute-binding protein (NikA).

Its subcellular location is the cell inner membrane. The enzyme catalyses Ni(2+)(out) + ATP + H2O = Ni(2+)(in) + ADP + phosphate + H(+). Functionally, part of the ABC transporter complex NikABCDE involved in nickel import. Responsible for energy coupling to the transport system. The polypeptide is Nickel import ATP-binding protein NikD (Shigella boydii serotype 4 (strain Sb227)).